Reading from the N-terminus, the 194-residue chain is Protein GrpE (194 aa).

Residues 1–44 (MAEEKQNEELNEQEELNETEAETAEAEQTAAEADAPAEETQTEM) are disordered. The segment covering 9–25 (ELNEQEELNETEAETAE) has biased composition (acidic residues).

This sequence belongs to the GrpE family. In terms of assembly, homodimer.

The protein resides in the cytoplasm. Its function is as follows. Participates actively in the response to hyperosmotic and heat shock by preventing the aggregation of stress-denatured proteins, in association with DnaK and GrpE. It is the nucleotide exchange factor for DnaK and may function as a thermosensor. Unfolded proteins bind initially to DnaJ; upon interaction with the DnaJ-bound protein, DnaK hydrolyzes its bound ATP, resulting in the formation of a stable complex. GrpE releases ADP from DnaK; ATP binding to DnaK triggers the release of the substrate protein, thus completing the reaction cycle. Several rounds of ATP-dependent interactions between DnaJ, DnaK and GrpE are required for fully efficient folding. The chain is Protein GrpE from Bacillus licheniformis (strain ATCC 14580 / DSM 13 / JCM 2505 / CCUG 7422 / NBRC 12200 / NCIMB 9375 / NCTC 10341 / NRRL NRS-1264 / Gibson 46).